The following is a 387-amino-acid chain: Phosphoglycerate kinase (387 aa).

Residues 21–23, R36, 59–62, R113, and R146 each bind substrate; these read DLN and HLGR. Residues K197, E314, and 340-343 contribute to the ATP site; that span reads GGDT.

It belongs to the phosphoglycerate kinase family. Monomer.

The protein localises to the cytoplasm. The enzyme catalyses (2R)-3-phosphoglycerate + ATP = (2R)-3-phospho-glyceroyl phosphate + ADP. The protein operates within carbohydrate degradation; glycolysis; pyruvate from D-glyceraldehyde 3-phosphate: step 2/5. This chain is Phosphoglycerate kinase, found in Pseudomonas putida (strain GB-1).